Here is a 125-residue protein sequence, read N- to C-terminus: Small ribosomal subunit protein uS12 (125 aa).

D89 bears the 3-methylthioaspartic acid mark.

It belongs to the universal ribosomal protein uS12 family. In terms of assembly, part of the 30S ribosomal subunit. Contacts proteins S8 and S17. May interact with IF1 in the 30S initiation complex.

Functionally, with S4 and S5 plays an important role in translational accuracy. In terms of biological role, interacts with and stabilizes bases of the 16S rRNA that are involved in tRNA selection in the A site and with the mRNA backbone. Located at the interface of the 30S and 50S subunits, it traverses the body of the 30S subunit contacting proteins on the other side and probably holding the rRNA structure together. The combined cluster of proteins S8, S12 and S17 appears to hold together the shoulder and platform of the 30S subunit. This is Small ribosomal subunit protein uS12 from Clostridium novyi (strain NT).